The sequence spans 171 residues: Ribosome maturation factor RimM (171 aa).

The 73-residue stretch at 97–169 (DGEFYYHEII…RVDVDIMEGL (73 aa)) folds into the PRC barrel domain.

The protein belongs to the RimM family. In terms of assembly, binds ribosomal protein uS19.

The protein resides in the cytoplasm. Functionally, an accessory protein needed during the final step in the assembly of 30S ribosomal subunit, possibly for assembly of the head region. Essential for efficient processing of 16S rRNA. May be needed both before and after RbfA during the maturation of 16S rRNA. It has affinity for free ribosomal 30S subunits but not for 70S ribosomes. The chain is Ribosome maturation factor RimM from Lactococcus lactis subsp. cremoris (strain SK11).